A 185-amino-acid polypeptide reads, in one-letter code: UPF0301 protein MS0260 (185 aa).

The protein belongs to the UPF0301 (AlgH) family.

In Mannheimia succiniciproducens (strain KCTC 0769BP / MBEL55E), this protein is UPF0301 protein MS0260.